Consider the following 322-residue polypeptide: Replication factor C small subunit (322 aa).

G50 to T57 is an ATP binding site.

Belongs to the activator 1 small subunits family. RfcS subfamily. Heteromultimer composed of small subunits (RfcS) and large subunits (RfcL).

In terms of biological role, part of the RFC clamp loader complex which loads the PCNA sliding clamp onto DNA. The chain is Replication factor C small subunit from Halobacterium salinarum (strain ATCC 700922 / JCM 11081 / NRC-1) (Halobacterium halobium).